Consider the following 189-residue polypeptide: Probable nicotinate-nucleotide adenylyltransferase (189 aa).

It belongs to the NadD family.

The catalysed reaction is nicotinate beta-D-ribonucleotide + ATP + H(+) = deamido-NAD(+) + diphosphate. It functions in the pathway cofactor biosynthesis; NAD(+) biosynthesis; deamido-NAD(+) from nicotinate D-ribonucleotide: step 1/1. Catalyzes the reversible adenylation of nicotinate mononucleotide (NaMN) to nicotinic acid adenine dinucleotide (NaAD). This Bacillus anthracis (strain CDC 684 / NRRL 3495) protein is Probable nicotinate-nucleotide adenylyltransferase.